The chain runs to 165 residues: DASH complex subunit SPC19 (165 aa).

A coiled-coil region spans residues 74-104; that stretch reads GDKLRKSMGRMQRELDTLQQTYELNDLRLKK. Phosphoserine is present on residues Ser107 and Ser116. Residues 132 to 165 adopt a coiled-coil conformation; that stretch reads VMMASSTNEELEELKKLKEKKKQLENKLEILKQK.

This sequence belongs to the DASH complex SPC19 family. As to quaternary structure, component of the DASH complex consisting of ASK1, DAD1, DAD2, DAD3, DAD4, DAM1, DUO1, HSK3, SPC19 and SPC34, with a stoichiometry of one copy of each subunit per complex. Multiple DASH complexes oligomerize to form a ring that encircles spindle microtubules and organizes the rod-like NDC80 complexes of the outer kinetochore. DASH complex oligomerization strengthens microtubule attachments. On cytoplasmic microtubules, DASH complexes appear to form patches instead of rings.

The protein resides in the nucleus. The protein localises to the cytoplasm. Its subcellular location is the cytoskeleton. It localises to the spindle. It is found in the chromosome. The protein resides in the centromere. The protein localises to the kinetochore. Its function is as follows. Component of the DASH complex that connects microtubules with kinetochores and couples microtubule depolymerisation to chromosome movement; it is involved in retrieving kinetochores to the spindle poles before their re-orientation on the spindle in early mitosis and allows microtubule depolymerization to pull chromosomes apart and resist detachment during anaphase. Kinetochores, consisting of a centromere-associated inner segment and a microtubule-contacting outer segment, play a crucial role in chromosome segregation by mediating the physical connection between centromeric DNA and microtubules. Kinetochores also serve as an input point for the spindle assembly checkpoint, which delays anaphase until all chromosomes have bioriented on the mitotic spindle. During spindle-kinetochore attachment, kinetochores first attach to the lateral surface of spindle microtubules, which supports the congression of chromosomes toward the middle of the dividing cell; they then slide along towards the spindle pole, a process independent of the DASH complex but requiring the NDC80 complex. When the end of a disassembling microtubule reaches the laterally attached kinetochore, the DASH complex together with the NDC80 complex and STU2 convert lateral attachment to end-on capture to produce a structure that can track with microtubule shortening and sustain attachment when tension is applied across sister kinetochores upon their biorientation. Microtubule depolymerization proceeds by protofilament splaying and induces the kinetochore-attached DASH complex to slide longitudinally, thereby helping to transduce depolymerization energy into pulling forces to disjoin chromatids. Incorrect microtubule attachments are corrected by releasing microubules from the kinetochore through phosphorylation by IPL1 of kinetochore components. Links the microtubule cytoskeleton to chromosomes during interphase. Also contributes to the poleward transport of kinetochores on microtubules following centromeric DNA replication in S-phase. The sequence is that of DASH complex subunit SPC19 (SPC19) from Saccharomyces cerevisiae (strain ATCC 204508 / S288c) (Baker's yeast).